Here is a 221-residue protein sequence, read N- to C-terminus: 3-phospho-D-glycerate guanylyltransferase (221 aa).

Belongs to the CofC family.

It catalyses the reaction (2R)-3-phosphoglycerate + GTP + H(+) = 3-[(R)-glyceryl]-diphospho-5'-guanosine + diphosphate. The catalysed reaction is (2S)-2-phospholactate + GTP + H(+) = (2S)-lactyl-2-diphospho-5'-guanosine + diphosphate. The protein operates within cofactor biosynthesis; coenzyme F420 biosynthesis. Functionally, guanylyltransferase that catalyzes the activation of (2R)-3-phosphoglycerate (3PG) as 3-[(R)-glyceryl]-diphospho-5'-guanosine, via the condensation of 3PG with GTP. It is involved in the biosynthesis of a derivative of the hydride carrier cofactor coenzyme F420, 3PG-F420. Can also use (2S)-2-phospholactate (2-PL), with lower turnover, and has weak activity with phosphoenolpyruvate (PEP). The sequence is that of 3-phospho-D-glycerate guanylyltransferase from Mycetohabitans rhizoxinica (strain DSM 19002 / CIP 109453 / HKI 454) (Paraburkholderia rhizoxinica).